A 129-amino-acid polypeptide reads, in one-letter code: Large ribosomal subunit protein uL14m (129 aa).

Belongs to the universal ribosomal protein uL14 family. In terms of assembly, component of the mitochondrial ribosome large subunit (39S) which comprises a 16S rRNA and about 50 distinct proteins.

Its subcellular location is the mitochondrion. In Dictyostelium discoideum (Social amoeba), this protein is Large ribosomal subunit protein uL14m (mrpl14).